We begin with the raw amino-acid sequence, 384 residues long: Dual-specificity RNA methyltransferase RlmN (384 aa).

Catalysis depends on E93, which acts as the Proton acceptor. Residues 99–339 (EETRGTLCVS…TTIRKTRGDD (241 aa)) enclose the Radical SAM core domain. C106 and C344 are joined by a disulfide. 3 residues coordinate [4Fe-4S] cluster: C113, C117, and C120. Residues 170–171 (GE), S202, 224–226 (SLH), and N301 each bind S-adenosyl-L-methionine. Catalysis depends on C344, which acts as the S-methylcysteine intermediate.

Belongs to the radical SAM superfamily. RlmN family. [4Fe-4S] cluster is required as a cofactor.

It is found in the cytoplasm. The catalysed reaction is adenosine(2503) in 23S rRNA + 2 reduced [2Fe-2S]-[ferredoxin] + 2 S-adenosyl-L-methionine = 2-methyladenosine(2503) in 23S rRNA + 5'-deoxyadenosine + L-methionine + 2 oxidized [2Fe-2S]-[ferredoxin] + S-adenosyl-L-homocysteine. It carries out the reaction adenosine(37) in tRNA + 2 reduced [2Fe-2S]-[ferredoxin] + 2 S-adenosyl-L-methionine = 2-methyladenosine(37) in tRNA + 5'-deoxyadenosine + L-methionine + 2 oxidized [2Fe-2S]-[ferredoxin] + S-adenosyl-L-homocysteine. In terms of biological role, specifically methylates position 2 of adenine 2503 in 23S rRNA and position 2 of adenine 37 in tRNAs. m2A2503 modification seems to play a crucial role in the proofreading step occurring at the peptidyl transferase center and thus would serve to optimize ribosomal fidelity. The protein is Dual-specificity RNA methyltransferase RlmN of Cupriavidus necator (strain ATCC 17699 / DSM 428 / KCTC 22496 / NCIMB 10442 / H16 / Stanier 337) (Ralstonia eutropha).